A 419-amino-acid polypeptide reads, in one-letter code: ATP-dependent RNA helicase RhlB (419 aa).

A Q motif motif is present at residues 9 to 37 (QRFSDLALHRSVQQAIKEKGFEFCTPIQA). The 178-residue stretch at 40-217 (LPITLKGQDI…FEHMNDPQYV (178 aa)) folds into the Helicase ATP-binding domain. 53–60 (AQTGTGKT) is an ATP binding site. The short motif at 163 to 166 (DEAD) is the DEAD box element. The 148-residue stretch at 241–388 (KMALLMTLLE…VSQYDAKALI (148 aa)) folds into the Helicase C-terminal domain.

Belongs to the DEAD box helicase family. RhlB subfamily. In terms of assembly, component of the RNA degradosome, which is a multiprotein complex involved in RNA processing and mRNA degradation.

It is found in the cytoplasm. It carries out the reaction ATP + H2O = ADP + phosphate + H(+). DEAD-box RNA helicase involved in RNA degradation. Has RNA-dependent ATPase activity and unwinds double-stranded RNA. This chain is ATP-dependent RNA helicase RhlB, found in Histophilus somni (strain 129Pt) (Haemophilus somnus).